A 2542-amino-acid chain; its full sequence is MLTDSGGGGTSFEEDLDSVAPRSAPAGASEPPPPGGVGLGIRTVRLFGEAGPASGVGSSGGGGSGSGTGGGDAALDFKLAAAVLRTGGGGGASGSDEDEVSEVESFILDQEDLDNPVLKTTSEIFLSSTAEGADLRTVDPETQARLEALLEAAGIGKLSTADGKAFADPEVLRRLTSSVSCALDEAAAALTRMKAENSHNAGQVDTRSLAEACSDGDVNAVRKLLDEGRSVNEHTEEGESLLCLACSAGYYELAQVLLAMHANVEDRGNKGDITPLMAASSGGYLDIVKLLLLHDADVNSQSATGNTALTYACAGGFVDIVKVLLNEGANIEDHNENGHTPLMEAASAGHVEVARVLLDHGAGINTHSNEFKESALTLACYKGHLDMVRFLLEAGADQEHKTDEMHTALMEACMDGHVEVARLLLDSGAQVNMPADSFESPLTLAACGGHVELAALLIERGANLEEVNDEGYTPLMEAAREGHEEMVALLLAQGANINAQTEETQETALTLACCGGFSEVADFLIKAGADIELGCSTPLMEASQEGHLELVKYLLASGANVHATTATGDTALTYACENGHTDVADVLLQAGADLEHESEGGRTPLMKAARAGHLCTVQFLISKGANVNRATANNDHTVVSLACAGGHLAVVELLLAHGADPTHRLKDGSTMLIEAAKGGHTNVVSYLLDYPNNVLSVPTTDVSQLPPPSQDQSQVPRVPTHTLAMVVPPQEPDRTSQENSPALLGVQKGTSKQKSSSLQVADQDLLPSFHPYQPLECIVEETEGKLNELGQRISAIEKAQLKSLELIQGEPLNKDKIEELKKNREEQVQKKKKILKELQKVERQLQMKTQQQFTKEYLETKGQKDTVSLHQQCSHRGVFPEGEGDGSLPEDHFSELPQVDTILFKDNDVDDEQQSPPSAEQIDFVPVQPLSSPQCNFSSDLGSNGTNSLELQKVSGNQQIVGQPQIAITGHDQGLLVQEPDGLMVATPAQTLTDTLDDLIAAVSTRVPTGSNSSSQTTECLTPESCSQTTSNVASQSMPPVYPSVDIDAHTESNHDTALTLACAGGHEELVSVLIARDAKIEHRDKKGFTPLILAATAGHVGVVEILLDKGGDIEAQSERTKDTPLSLACSGGRQEVVDLLLARGANKEHRNVSDYTPLSLAASGGYVNIIKILLNAGAEINSRTGSKLGISPLMLAAMNGHVPAVKLLLDMGSDINAQIETNRNTALTLACFQGRAEVVSLLLDRKANVEHRAKTGLTPLMEAASGGYAEVGRVLLDKGADVNAPPVPSSRDTALTIAADKGHYKFCELLIHRGAHIDVRNKKGNTPLWLASNGGHFDVVQLLVQAGADVDAADNRKITPLMSAFRKGHVKVVQYLVKEVNQFPSDIECMRYIATITDKELLKKCHQCVETIVKAKDQQAAEANKNASILLKELDLEKSREESRKQALAAKREKRKEKRKKKKEEQKRKQEEDEENKPKENSELPEDEDEEENDEDVEQEVPIEPPSATTTTTIGISATSATFTNVFGKKRANVVTTPSTNRKNKKNKTKETPPTAHLILPEQHMSLAQQKADKNKINGEPRGGGAGGNSDSDNLDSTDCNSESSSGGKSQELNFVMDVNSSKYPSLLLHSQEEKTSTATSKTQTRLEGEVTPNSLSTSYKTVSLPLSSPNIKLNLTSPKRGQKREEGWKEVVRRSKKLSVPASVVSRIMGRGGCNITAIQDVTGAHIDVDKQKDKNGERMITIRGGTESTRYAVQLINALIQDPAKELEDLIPKNHIRTPASTKSIHANFSSGVGTTAASSKNAFPLGAPTLVTSQATTLSTFQPANKLNKNVPTNVRSSFPVSLPLAYPHPHFALLAAQTMQQIRHPRLPMAQFGGTFSPSPNTWGPFPVRPVNPGNTNSSPKHNNTSRLPNQNGTVLPSESAGLATASCPITVSSVVAASQQLCVTNTRTPSSVRKQLFACVPKTSPPATVISSVTSTCSSLPSVSSAPITSGQAPTTFLPASTSQAQLSSQKMESFSAVPPTKEKVSTQDQPMANLCTPSSTANSCSSSASNTPGAPETHPSSSPTPTSSNTQEEAQPSSVSDLSPMSMPFASNSEPAPLTLTSPRMVAADNQDTSNLPQLAVPAPRVSHRMQPRGSFYSMVPNATIHQDPQSIFVTNPVTLTPPQGPPAAVQLSSAVNIMNGSQMHINPANKSLPPTFGPATLFNHFSSLFDSSQVPANQGWGDGPLSSRVATDASFTVQSAFLGNSVLGHLENMHPDNSKAPGFRPPSQRVSTSPVGLPSIDPSGSSPSSSSAPLASFSGIPGTRVFLQGPAPVGTPSFNRQHFSPHPWTSASNSSTSAPPTLGQPKGVSASQDRKIPPPIGTERLARIRQGGSVAQAPAGTSFVAPVGHSGIWSFGVNAVSEGLSGWSQSVMGNHPMHQQLSDPSTFSQHQPMERDDSGMVAPSNIFHQPMASGFVDFSKGLPISMYGGTIIPSHPQLADVPGGPLFNGLHNPDPAWNPMIKVIQNSTECTDAQQIWPGTWAPHIGNMHLKYVN.

Met-1 carries the post-translational modification N-acetylmethionine. A compositionally biased stretch (gly residues) spans 1–10 (MLTDSGGGGT). 2 disordered regions span residues 1 to 44 (MLTD…IRTV) and 50 to 69 (AGPA…SGTG). The segment covering 20–29 (APRSAPAGAS) has biased composition (low complexity). A compositionally biased stretch (gly residues) spans 57–69 (GSSGGGGSGSGTG). Phosphoserine is present on residues Ser-101 and Ser-105. ANK repeat units lie at residues 204 to 233 (VDTR…SVNE), 237 to 266 (EGES…NVED), 271 to 300 (GDIT…DVNS), 304 to 333 (TGNT…NIED), 337 to 366 (NGHT…GINT), 371 to 400 (FKES…DQEH), 404 to 433 (EMHT…QVNM), 437 to 466 (SFES…NLEE), 470 to 499 (EGYT…NINA), 504 to 533 (TQET…DIEL), 534 to 563 (GCST…NVHA), 567 to 596 (TGDT…DLEH), 600 to 629 (GGRT…NVNR), 634 to 663 (NDHT…DPTH), and 667 to 696 (DGST…NVLS). Residues 775–852 (LECIVEETEG…RQLQMKTQQQ (78 aa)) are a coiled coil. Ser-803 is subject to Phosphoserine. ANK repeat units follow at residues 1054-1083 (NHDT…KIEH), 1087-1116 (KGFT…DIEA), 1121-1150 (TKDT…NKEH), 1154-1183 (SDYT…EINS), 1189-1218 (LGIS…DINA), 1223-1252 (NRNT…NVEH), 1256-1285 (TGLT…DVNA), 1291-1320 (SRDT…HIDV), 1324-1353 (KGNT…DVDA), and 1357-1386 (RKIT…QFPS). Residues 1415–1485 (KAKDQQAAEA…ENKPKENSEL (71 aa)) are a coiled coil. 3 disordered regions span residues 1441–1517 (REES…TIGI), 1534–1614 (NVVT…SQEL), and 1632–1664 (SQEE…YKTV). A compositionally biased stretch (basic residues) spans 1453-1463 (REKRKEKRKKK). Basic and acidic residues predominate over residues 1464-1483 (KEEQKRKQEEDEENKPKENS). Residues 1484–1502 (ELPEDEDEEENDEDVEQEV) are compositionally biased toward acidic residues. Low complexity predominate over residues 1503 to 1517 (PIEPPSATTTTTIGI). A Phosphoserine modification is found at Ser-1540. Thr-1553 is subject to Phosphothreonine. Residues 1590–1603 (NSDSDNLDSTDCNS) are compositionally biased toward low complexity. The segment covering 1604-1614 (ESSSGGKSQEL) has biased composition (polar residues). The residue at position 1632 (Ser-1632) is a Phosphoserine. The span at 1638–1664 (STATSKTQTRLEGEVTPNSLSTSYKTV) shows a compositional bias: polar residues. Thr-1653 is subject to Phosphothreonine. Positions 1695–1759 (RRSKKLSVPA…ESTRYAVQLI (65 aa)) constitute a KH domain. Disordered regions lie at residues 1886-1923 (NTWG…VLPS), 1987-2106 (PSVS…APLT), and 2260-2367 (NMHP…IPPP). Over residues 1898–1922 (PGNTNSSPKHNNTSRLPNQNGTVLP) the composition is skewed to polar residues. The segment covering 1987–1996 (PSVSSAPITS) has biased composition (low complexity). Over residues 1997–2019 (GQAPTTFLPASTSQAQLSSQKME) the composition is skewed to polar residues. Residues 2042 to 2077 (CTPSSTANSCSSSASNTPGAPETHPSSSPTPTSSNT) show a composition bias toward low complexity. Over residues 2078 to 2106 (QEEAQPSSVSDLSPMSMPFASNSEPAPLT) the composition is skewed to polar residues. Composition is skewed to low complexity over residues 2285–2308 (LPSI…FSGI) and 2337–2349 (TSAS…APPT).

Belongs to the mask family. In terms of assembly, interacts with PTPN11. Isoform 2 interacts with HIV-1 VPR. Interacts with NOD2. Ubiquitous with high expression in cervix, spleen and brain. Expressed in hematopoietic cells with increased expression in leukemia cells. Isoform 2 is highly expressed in spleen with almost no expression in muscle and brain.

It localises to the cytoplasm. Functionally, may play a role as a scaffolding protein that may be associated with the abnormal phenotype of leukemia cells. Isoform 2 may possess an antiapoptotic effect and protect cells during normal cell survival through its regulation of caspases. In Homo sapiens (Human), this protein is Ankyrin repeat and KH domain-containing protein 1 (ANKHD1).